Reading from the N-terminus, the 143-residue chain is Large ribosomal subunit protein uL11 (143 aa).

This sequence belongs to the universal ribosomal protein uL11 family. Part of the ribosomal stalk of the 50S ribosomal subunit. Interacts with L10 and the large rRNA to form the base of the stalk. L10 forms an elongated spine to which L12 dimers bind in a sequential fashion forming a multimeric L10(L12)X complex. In terms of processing, one or more lysine residues are methylated.

Functionally, forms part of the ribosomal stalk which helps the ribosome interact with GTP-bound translation factors. This chain is Large ribosomal subunit protein uL11, found in Rhizobium rhizogenes (strain K84 / ATCC BAA-868) (Agrobacterium radiobacter).